The sequence spans 566 residues: Urease subunit alpha (566 aa).

The Urease domain occupies 128–566 (GGIDTHIHWI…LPMAQRYFLF (439 aa)). Ni(2+) contacts are provided by H133, H135, and K216. An N6-carboxylysine modification is found at K216. H218 provides a ligand contact to substrate. Ni(2+)-binding residues include H245 and H271. The active-site Proton donor is the H319. D359 provides a ligand contact to Ni(2+).

The protein belongs to the metallo-dependent hydrolases superfamily. Urease alpha subunit family. As to quaternary structure, heterotrimer of UreA (gamma), UreB (beta) and UreC (alpha) subunits. Three heterotrimers associate to form the active enzyme. The cofactor is Ni cation. In terms of processing, carboxylation allows a single lysine to coordinate two nickel ions.

Its subcellular location is the cytoplasm. The catalysed reaction is urea + 2 H2O + H(+) = hydrogencarbonate + 2 NH4(+). Its pathway is nitrogen metabolism; urea degradation; CO(2) and NH(3) from urea (urease route): step 1/1. The chain is Urease subunit alpha from Acinetobacter baylyi (strain ATCC 33305 / BD413 / ADP1).